The chain runs to 126 residues: Holo-[acyl-carrier-protein] synthase (126 aa).

Residues D8 and E59 each coordinate Mg(2+).

It belongs to the P-Pant transferase superfamily. AcpS family. The cofactor is Mg(2+).

The protein localises to the cytoplasm. The enzyme catalyses apo-[ACP] + CoA = holo-[ACP] + adenosine 3',5'-bisphosphate + H(+). Functionally, transfers the 4'-phosphopantetheine moiety from coenzyme A to a Ser of acyl-carrier-protein. The chain is Holo-[acyl-carrier-protein] synthase from Rickettsia prowazekii (strain Madrid E).